Here is a 140-residue protein sequence, read N- to C-terminus: Nuclear receptor 2C2-associated protein (140 aa).

Belongs to the NR2C2AP family. As to quaternary structure, interacts with NR2C2/TR4.

Its subcellular location is the nucleus. Functionally, may act as a repressor of NR2C2-mediated transactivation by suppressing the binding between NR2C2/TR4 and the TR4-response element in target genes. The chain is Nuclear receptor 2C2-associated protein (NR2C2AP) from Bos taurus (Bovine).